A 129-amino-acid polypeptide reads, in one-letter code: Large ribosomal subunit protein bL20 (129 aa).

This sequence belongs to the bacterial ribosomal protein bL20 family.

Binds directly to 23S ribosomal RNA and is necessary for the in vitro assembly process of the 50S ribosomal subunit. It is not involved in the protein synthesizing functions of that subunit. The protein is Large ribosomal subunit protein bL20 of Mycobacteroides abscessus (strain ATCC 19977 / DSM 44196 / CCUG 20993 / CIP 104536 / JCM 13569 / NCTC 13031 / TMC 1543 / L948) (Mycobacterium abscessus).